A 217-amino-acid polypeptide reads, in one-letter code: 2-phospho-L-lactate guanylyltransferase (217 aa).

This sequence belongs to the CofC family. In terms of assembly, homodimer.

It carries out the reaction (2S)-2-phospholactate + GTP + H(+) = (2S)-lactyl-2-diphospho-5'-guanosine + diphosphate. Its pathway is cofactor biosynthesis; coenzyme F420 biosynthesis. Functionally, guanylyltransferase that catalyzes the activation of (2S)-2-phospholactate (2-PL) as (2S)-lactyl-2-diphospho-5'-guanosine, via the condensation of 2-PL with GTP. It is involved in the biosynthesis of coenzyme F420, a hydride carrier cofactor. This is 2-phospho-L-lactate guanylyltransferase from Methanospirillum hungatei JF-1 (strain ATCC 27890 / DSM 864 / NBRC 100397 / JF-1).